The primary structure comprises 388 residues: MAKRRSRGDGGLHWDEKRQRWIATANLGFDPSGKRIVKRGSGKTKTEAKNKLKEVLRDHEDGLAIAPTGYTVADAVNDWLAYGLAGRDQRTVENCTHLSQKHVIPGLGARKLRDLSAEDVDRWLAAKAQTLSTRSLQAVHSCLNRAVKRAMARDKVKRNVVELCSVPQGQPGRPSKALTFAQAEAVLNAAEGTSMHAYIVVALLTGARTEELRALTWDHVFLKGSPDVEPPQPPHIAVWRSVRRGGDTKTRKSRRTLALPARCVEVLWQHFEDQGWERLAAGDKWEEHGLVFSSAVGKPLDATNVRRAFRQALKDANGINADEWTPRELRHSFVSLLSDRGVPLEEISRLVGHSGTAVTEEVYRKQIRPVIQTGAVVMDGIFKRGPAR.

The Core-binding (CB) domain maps to 70–151 (YTVADAVNDW…CLNRAVKRAM (82 aa)). The 207-residue stretch at 173–379 (RPSKALTFAQ…VIQTGAVVMD (207 aa)) folds into the Tyr recombinase domain. Catalysis depends on residues Arg-208, Lys-249, Arg-330, and His-353. Residue Tyr-363 is the O-(3'-phospho-DNA)-tyrosine intermediate of the active site.

It belongs to the 'phage' integrase family.

Required for integration of pSAM2. The chain is Integrase (int) from Streptomyces ambofaciens.